The chain runs to 262 residues: 5'-nucleotidase SurE (262 aa).

A divalent metal cation is bound by residues D11, D12, S43, and N101. The segment covering 220 to 229 has biased composition (basic and acidic residues); sequence SAGDGPKEWP. The interval 220–246 is disordered; the sequence is SAGDGPKEWPSDVSQIETNSPSLTPIQ. The segment covering 231–244 has biased composition (polar residues); the sequence is DVSQIETNSPSLTP.

Belongs to the SurE nucleotidase family. The cofactor is a divalent metal cation.

The protein resides in the cytoplasm. The enzyme catalyses a ribonucleoside 5'-phosphate + H2O = a ribonucleoside + phosphate. Functionally, nucleotidase that shows phosphatase activity on nucleoside 5'-monophosphates. The chain is 5'-nucleotidase SurE from Prochlorococcus marinus (strain SARG / CCMP1375 / SS120).